Reading from the N-terminus, the 558-residue chain is Nucleoprotein (558 aa).

Residues 54–237 (MRKERRDDKD…ITEQQSSINI (184 aa)) are binding site for the cap structure m7GTP. Mn(2+)-binding residues include Asp-382 and Glu-384. Zn(2+)-binding residues include Glu-392, Cys-499, His-502, and Cys-518. Asp-522 serves as a coordination point for Mn(2+).

This sequence belongs to the arenaviridae nucleocapsid protein family. Homomultimerizes to form the nucleocapsid. Binds to viral genomic RNA. Interacts with glycoprotein G2. Interacts with protein Z; this interaction probably directs the encapsidated genome to budding sites. Interacts with protein L; this interaction does not interfere with Z-L interaction. Interacts with host IKBKE (via Protein kinase domain); the interaction inhibits IKBKE kinase activity.

It is found in the virion. The protein resides in the host cytoplasm. Its function is as follows. Encapsidates the genome, protecting it from nucleases. The encapsidated genomic RNA is termed the nucleocapsid (NC). Serves as template for viral transcription and replication. The increased presence of protein N in host cell does not seem to trigger the switch from transcription to replication as observed in other negative strain RNA viruses. Through the interaction with host IKBKE, strongly inhibits the phosphorylation and nuclear translocation of host IRF3, a protein involved in interferon activation pathway, leading to the inhibition of interferon-beta and IRF3-dependent promoters activation. Also encodes a functional 3'-5' exoribonuclease that degrades preferentially dsRNA substrates and thereby participates in the suppression of interferon induction. The chain is Nucleoprotein from Lymphocytic choriomeningitis virus (strain WE) (LCMV).